The primary structure comprises 225 residues: Uridylate kinase (225 aa).

9 to 10 serves as a coordination point for ATP; sequence GS. G46 contacts UMP. Positions 47 and 51 each coordinate ATP. UMP is bound by residues D67 and 115–121; that span reads THPAHTT. ATP is bound by residues T141, N142, Y147, and D150.

This sequence belongs to the UMP kinase family. Homohexamer.

Its subcellular location is the cytoplasm. It carries out the reaction UMP + ATP = UDP + ADP. It participates in pyrimidine metabolism; CTP biosynthesis via de novo pathway; UDP from UMP (UMPK route): step 1/1. Inhibited by UTP. Functionally, catalyzes the reversible phosphorylation of UMP to UDP. The polypeptide is Uridylate kinase (Methanococcus maripaludis (strain C5 / ATCC BAA-1333)).